A 207-amino-acid chain; its full sequence is Cilia- and flagella-associated protein 418 (207 aa).

The required for interaction with FAM161A stretch occupies residues 1-75 (MAEDLDELLD…LINEILEEPN (75 aa)). Residues 26–52 (MVEQPKGCGGGTHSSDRNQAKAKETLR) are disordered. A compositionally biased stretch (basic and acidic residues) spans 39–52 (SSDRNQAKAKETLR).

As to quaternary structure, interacts (via N-terminus) with FAM161A (via central region); the interaction is direct. As to expression, widely expressed, with highest levels in heart and brain. Also expressed in the retina (at protein level).

Its subcellular location is the cytoplasm. It localises to the photoreceptor inner segment. May be involved in photoreceptor outer segment disk morphogenesis. The protein is Cilia- and flagella-associated protein 418 of Homo sapiens (Human).